The following is a 393-amino-acid chain: Lipid-A-disaccharide synthase (393 aa).

This sequence belongs to the LpxB family.

The catalysed reaction is a lipid X + a UDP-2-N,3-O-bis[(3R)-3-hydroxyacyl]-alpha-D-glucosamine = a lipid A disaccharide + UDP + H(+). Its pathway is bacterial outer membrane biogenesis; LPS lipid A biosynthesis. Its function is as follows. Condensation of UDP-2,3-diacylglucosamine and 2,3-diacylglucosamine-1-phosphate to form lipid A disaccharide, a precursor of lipid A, a phosphorylated glycolipid that anchors the lipopolysaccharide to the outer membrane of the cell. In Actinobacillus pleuropneumoniae serotype 5b (strain L20), this protein is Lipid-A-disaccharide synthase.